A 683-amino-acid chain; its full sequence is U4/U6 small nuclear ribonucleoprotein Prp3 (683 aa).

Residues M1–R87 enclose the PWI domain. Basic and acidic residues predominate over residues G73–G107. Residues G73 to G135 form a disordered region. A Glycyl lysine isopeptide (Lys-Gly) (interchain with G-Cter in SUMO2) cross-link involves residue K139. The tract at residues I153–I183 is disordered. S164 carries the phosphoserine modification. Phosphothreonine is present on T167. Glycyl lysine isopeptide (Lys-Gly) (interchain with G-Cter in SUMO2) cross-links involve residues K244 and K252. Residues N416–N550 form a mediates interaction with SART3 region. A Phosphoserine modification is found at S619.

As to quaternary structure, component of the precatalytic spliceosome (spliceosome B complex). Component of the U4/U6-U5 tri-snRNP complex, a building block of the precatalytic spliceosome (spliceosome B complex). The U4/U6-U5 tri-snRNP complex is composed of the U4, U6 and U5 snRNAs and at least PRPF3, PRPF4, PRPF6, PRPF8, PRPF31, SNRNP200, TXNL4A, SNRNP40, SNRPB, SNRPD1, SNRPD2, SNRPD3, SNRPE, SNRPF, SNRPG, DDX23, CD2BP2, PPIH, SNU13, EFTUD2, SART1 and USP39, plus LSM2, LSM3, LSM4, LSM5, LSM6, LSM7 and LSM8. Interacts directly with PRPF4. Part of a heteromeric complex containing PPIH, PRPF3 and PRPF4 that is stable in the absence of RNA. Interacts with SART3; the interaction is direct and recruits the deubiquitinase USP4 to PRPF3. Interacts with PRPF19. Interacts ('Lys-63'-linked polyubiquitinated) with PRPF8 (via the MPN (JAB/Mov34) domain); may stabilize the U4/U6-U5 tri-snRNP complex. Interacts with ERCC6. Ubiquitinated. Undergoes 'Lys-63'-linked polyubiquitination by PRPF19 and deubiquitination by USP4. 'Lys-63'-linked ubiquitination increases the affinity for PRPF8 and may regulate the assembly of the U4/U6-U5 tri-snRNP complex.

It is found in the nucleus. The protein localises to the nucleus speckle. Plays a role in pre-mRNA splicing as component of the U4/U6-U5 tri-snRNP complex that is involved in spliceosome assembly, and as component of the precatalytic spliceosome (spliceosome B complex). The protein is U4/U6 small nuclear ribonucleoprotein Prp3 (PRPF3) of Bos taurus (Bovine).